A 185-amino-acid chain; its full sequence is Ribosome-recycling factor (185 aa).

The protein belongs to the RRF family.

The protein localises to the cytoplasm. Functionally, responsible for the release of ribosomes from messenger RNA at the termination of protein biosynthesis. May increase the efficiency of translation by recycling ribosomes from one round of translation to another. This is Ribosome-recycling factor from Geobacillus kaustophilus (strain HTA426).